The chain runs to 442 residues: D-serine dehydratase 2 (442 aa).

Residue Lys-118 is modified to N6-(pyridoxal phosphate)lysine.

This sequence belongs to the serine/threonine dehydratase family. DsdA subfamily. Monomer. Requires pyridoxal 5'-phosphate as cofactor.

The catalysed reaction is D-serine = pyruvate + NH4(+). In Escherichia coli O6:K15:H31 (strain 536 / UPEC), this protein is D-serine dehydratase 2.